The chain runs to 304 residues: Secreted mono- and diacylglycerol lipase MDL4 (304 aa).

A signal peptide spans Met-1 to Ala-19. A disulfide bridge connects residues Cys-55 and Cys-297. N-linked (GlcNAc...) asparagine glycans are attached at residues Asn-102 and Asn-161. Ser-171 functions as the Nucleophile in the catalytic mechanism. Asp-228 is an active-site residue. N-linked (GlcNAc...) asparagine glycosylation occurs at Asn-253. His-281 is an active-site residue.

It belongs to the AB hydrolase superfamily. Lipase family. Class 3 subfamily.

It localises to the secreted. It is found in the cell wall. The enzyme catalyses a monoacylglycerol + H2O = glycerol + a fatty acid + H(+). It carries out the reaction a diacylglycerol + H2O = a monoacylglycerol + a fatty acid + H(+). Functionally, secreted lipase involved in Dandruff and seborrheic dermatitis (D/SD) probably via lipase-mediated breakdown of sebaceous lipids and release of irritating free fatty acids. Shows activity against monoglyceride and diglyceride substrates, but not triglyceride substrates and does not exhibit regio-selective production of diacylglycerols. Cleaves oleic acid from 1,2 isomers of diolein on both the 1 and the 2 position of the glycerol backbone, resulting mainly in free fatty acids but no monoolein is detected. Shows activity on monoolein and liberates mostly free fatty acids, but can also perform the reverse reaction and produce diolein. This chain is Secreted mono- and diacylglycerol lipase MDL4, found in Malassezia globosa (strain ATCC MYA-4612 / CBS 7966) (Dandruff-associated fungus).